The chain runs to 251 residues: 3-deoxy-manno-octulosonate cytidylyltransferase (251 aa).

Belongs to the KdsB family.

The protein localises to the cytoplasm. It catalyses the reaction 3-deoxy-alpha-D-manno-oct-2-ulosonate + CTP = CMP-3-deoxy-beta-D-manno-octulosonate + diphosphate. It functions in the pathway nucleotide-sugar biosynthesis; CMP-3-deoxy-D-manno-octulosonate biosynthesis; CMP-3-deoxy-D-manno-octulosonate from 3-deoxy-D-manno-octulosonate and CTP: step 1/1. It participates in bacterial outer membrane biogenesis; lipopolysaccharide biosynthesis. In terms of biological role, activates KDO (a required 8-carbon sugar) for incorporation into bacterial lipopolysaccharide in Gram-negative bacteria. The protein is 3-deoxy-manno-octulosonate cytidylyltransferase of Vibrio vulnificus (strain CMCP6).